Here is a 193-residue protein sequence, read N- to C-terminus: Probable GTP-binding protein EngB (193 aa).

In terms of domain architecture, EngB-type G spans 22–193 (ALPEFALAGR…EAWAALERFL (172 aa)). GTP is bound by residues 30 to 37 (GRSNVGKS), 57 to 61 (GKTQT), 75 to 78 (DVPG), 142 to 145 (TKAD), and 174 to 176 (FSA). Mg(2+) is bound by residues Ser37 and Thr59.

It belongs to the TRAFAC class TrmE-Era-EngA-EngB-Septin-like GTPase superfamily. EngB GTPase family. It depends on Mg(2+) as a cofactor.

Necessary for normal cell division and for the maintenance of normal septation. This chain is Probable GTP-binding protein EngB, found in Geobacillus sp. (strain WCH70).